The sequence spans 400 residues: PHD finger protein 24 (400 aa).

The N-myristoyl glycine moiety is linked to residue glycine 2. The segment at 30–108 (DRPSIRRTGE…FTPPAFIRPT (79 aa)) is disordered. Arginine 36 is subject to Omega-N-methylarginine. Serine 43 bears the Phosphoserine mark. Threonine 47 bears the Phosphothreonine mark. At serine 51 the chain carries Phosphoserine. Positions 78-97 (AWERLRDGRGVEPEEFDRTG) are enriched in basic and acidic residues. The PHD-type zinc-finger motif lies at 129 to 190 (NDEMCDVCEV…TGWSCHYCDN (62 aa)).

The protein is PHD finger protein 24 of Pongo abelii (Sumatran orangutan).